A 480-amino-acid polypeptide reads, in one-letter code: UDP-N-acetylmuramoylalanine--D-glutamate ligase (480 aa).

Residue 110-116 coordinates ATP; sequence GTNGKST.

The protein belongs to the MurCDEF family.

It is found in the cytoplasm. The catalysed reaction is UDP-N-acetyl-alpha-D-muramoyl-L-alanine + D-glutamate + ATP = UDP-N-acetyl-alpha-D-muramoyl-L-alanyl-D-glutamate + ADP + phosphate + H(+). The protein operates within cell wall biogenesis; peptidoglycan biosynthesis. In terms of biological role, cell wall formation. Catalyzes the addition of glutamate to the nucleotide precursor UDP-N-acetylmuramoyl-L-alanine (UMA). This chain is UDP-N-acetylmuramoylalanine--D-glutamate ligase, found in Synechococcus sp. (strain JA-2-3B'a(2-13)) (Cyanobacteria bacterium Yellowstone B-Prime).